We begin with the raw amino-acid sequence, 276 residues long: Ribosomal RNA small subunit methyltransferase A (276 aa).

The S-adenosyl-L-methionine site is built by Asn27, Leu29, Gly54, Glu75, Asp101, and Asn123.

Belongs to the class I-like SAM-binding methyltransferase superfamily. rRNA adenine N(6)-methyltransferase family. RsmA subfamily.

Its subcellular location is the cytoplasm. It carries out the reaction adenosine(1518)/adenosine(1519) in 16S rRNA + 4 S-adenosyl-L-methionine = N(6)-dimethyladenosine(1518)/N(6)-dimethyladenosine(1519) in 16S rRNA + 4 S-adenosyl-L-homocysteine + 4 H(+). Functionally, specifically dimethylates two adjacent adenosines (A1518 and A1519) in the loop of a conserved hairpin near the 3'-end of 16S rRNA in the 30S particle. May play a critical role in biogenesis of 30S subunits. The sequence is that of Ribosomal RNA small subunit methyltransferase A from Bartonella henselae (strain ATCC 49882 / DSM 28221 / CCUG 30454 / Houston 1) (Rochalimaea henselae).